The following is a 539-amino-acid chain: Putative S-adenosyl-L-methionine-dependent methyltransferase MAP_4079 (539 aa).

Residues D134 and 163-164 (DL) each bind S-adenosyl-L-methionine. Positions 290-392 (AGYGRGRRRP…RGEPGERGGQ (103 aa)) are disordered. Over residues 301 to 313 (SATSCRGTCSSPR) the composition is skewed to polar residues. Gly residues predominate over residues 341 to 351 (HGFGNQCGGPD).

Belongs to the UPF0677 family.

Exhibits S-adenosyl-L-methionine-dependent methyltransferase activity. The protein is Putative S-adenosyl-L-methionine-dependent methyltransferase MAP_4079 of Mycolicibacterium paratuberculosis (strain ATCC BAA-968 / K-10) (Mycobacterium paratuberculosis).